The following is a 62-amino-acid chain: Large ribosomal subunit protein bL28 (62 aa).

Belongs to the bacterial ribosomal protein bL28 family.

This chain is Large ribosomal subunit protein bL28, found in Helicobacter acinonychis (strain Sheeba).